A 116-amino-acid polypeptide reads, in one-letter code: Large ribosomal subunit protein bL20 (116 aa).

The protein belongs to the bacterial ribosomal protein bL20 family.

Binds directly to 23S ribosomal RNA and is necessary for the in vitro assembly process of the 50S ribosomal subunit. It is not involved in the protein synthesizing functions of that subunit. The polypeptide is Large ribosomal subunit protein bL20 (rplT) (Helicobacter pylori (strain ATCC 700392 / 26695) (Campylobacter pylori)).